A 167-amino-acid chain; its full sequence is Shikimate kinase (167 aa).

Gly12 to Thr17 is an ATP binding site. Position 16 (Thr16) interacts with Mg(2+). Substrate is bound by residues Asp34, Arg58, and Gly80. Arg117 provides a ligand contact to ATP. Arg135 contributes to the substrate binding site. An ATP-binding site is contributed by Arg152.

Belongs to the shikimate kinase family. As to quaternary structure, monomer. It depends on Mg(2+) as a cofactor.

It is found in the cytoplasm. It catalyses the reaction shikimate + ATP = 3-phosphoshikimate + ADP + H(+). Its pathway is metabolic intermediate biosynthesis; chorismate biosynthesis; chorismate from D-erythrose 4-phosphate and phosphoenolpyruvate: step 5/7. Its function is as follows. Catalyzes the specific phosphorylation of the 3-hydroxyl group of shikimic acid using ATP as a cosubstrate. This chain is Shikimate kinase, found in Salinispora tropica (strain ATCC BAA-916 / DSM 44818 / JCM 13857 / NBRC 105044 / CNB-440).